The sequence spans 227 residues: MKFAVIQFPGSNCDLDMLHAIRDSLGEEAEYVWHAETSLEGFDAVLLPGGFSYGDYLRTGAIAKFSSIMPEVLRFAETGKPVLGVCNGFQILTEIGLLPGALIRNNNLHFICKTVPLRVVNGNTIFTGLYEDNEVIHVPVAHGEGNYYCDDETLLKLKENNQIVFTYDSVNPNGSRADIAGIVNERGNVLGMMPHPERAVEDIIGGTDGLRLFQSIVQAWKEEQVNA.

A Glutamine amidotransferase type-1 domain is found at 2 to 226; the sequence is KFAVIQFPGS…VQAWKEEQVN (225 aa). Cys86 acts as the Nucleophile in catalysis. Active-site residues include His195 and Glu197.

In terms of assembly, part of the FGAM synthase complex composed of 1 PurL, 1 PurQ and 2 PurS subunits.

The protein resides in the cytoplasm. It carries out the reaction N(2)-formyl-N(1)-(5-phospho-beta-D-ribosyl)glycinamide + L-glutamine + ATP + H2O = 2-formamido-N(1)-(5-O-phospho-beta-D-ribosyl)acetamidine + L-glutamate + ADP + phosphate + H(+). The catalysed reaction is L-glutamine + H2O = L-glutamate + NH4(+). It functions in the pathway purine metabolism; IMP biosynthesis via de novo pathway; 5-amino-1-(5-phospho-D-ribosyl)imidazole from N(2)-formyl-N(1)-(5-phospho-D-ribosyl)glycinamide: step 1/2. Functionally, part of the phosphoribosylformylglycinamidine synthase complex involved in the purines biosynthetic pathway. Catalyzes the ATP-dependent conversion of formylglycinamide ribonucleotide (FGAR) and glutamine to yield formylglycinamidine ribonucleotide (FGAM) and glutamate. The FGAM synthase complex is composed of three subunits. PurQ produces an ammonia molecule by converting glutamine to glutamate. PurL transfers the ammonia molecule to FGAR to form FGAM in an ATP-dependent manner. PurS interacts with PurQ and PurL and is thought to assist in the transfer of the ammonia molecule from PurQ to PurL. This chain is Phosphoribosylformylglycinamidine synthase subunit PurQ, found in Listeria welshimeri serovar 6b (strain ATCC 35897 / DSM 20650 / CCUG 15529 / CIP 8149 / NCTC 11857 / SLCC 5334 / V8).